Here is a 468-residue protein sequence, read N- to C-terminus: uncharacterized protein (468 aa).

The region spanning 1 to 69 is the HTH gntR-type domain; that stretch reads MKKYQQLAEQ…PQSGYYVAPQ (69 aa). Lys-312 is subject to N6-(pyridoxal phosphate)lysine.

This sequence in the C-terminal section; belongs to the class-I pyridoxal-phosphate-dependent aminotransferase family.

This is an uncharacterized protein from Escherichia coli (strain K12).